A 347-amino-acid chain; its full sequence is S-adenosylmethionine:tRNA ribosyltransferase-isomerase (347 aa).

Belongs to the QueA family. As to quaternary structure, monomer.

The protein localises to the cytoplasm. The enzyme catalyses 7-aminomethyl-7-carbaguanosine(34) in tRNA + S-adenosyl-L-methionine = epoxyqueuosine(34) in tRNA + adenine + L-methionine + 2 H(+). Its pathway is tRNA modification; tRNA-queuosine biosynthesis. Transfers and isomerizes the ribose moiety from AdoMet to the 7-aminomethyl group of 7-deazaguanine (preQ1-tRNA) to give epoxyqueuosine (oQ-tRNA). This chain is S-adenosylmethionine:tRNA ribosyltransferase-isomerase, found in Bordetella parapertussis (strain 12822 / ATCC BAA-587 / NCTC 13253).